Reading from the N-terminus, the 138-residue chain is Nucleoside diphosphate kinase (138 aa).

ATP-binding residues include K10, F58, R86, T92, R103, and N113. The active-site Pros-phosphohistidine intermediate is H116.

Belongs to the NDK family. As to quaternary structure, homotetramer. Requires Mg(2+) as cofactor.

It is found in the cytoplasm. The catalysed reaction is a 2'-deoxyribonucleoside 5'-diphosphate + ATP = a 2'-deoxyribonucleoside 5'-triphosphate + ADP. It carries out the reaction a ribonucleoside 5'-diphosphate + ATP = a ribonucleoside 5'-triphosphate + ADP. Functionally, major role in the synthesis of nucleoside triphosphates other than ATP. The ATP gamma phosphate is transferred to the NDP beta phosphate via a ping-pong mechanism, using a phosphorylated active-site intermediate. This is Nucleoside diphosphate kinase from Actinobacillus pleuropneumoniae serotype 5b (strain L20).